Reading from the N-terminus, the 226-residue chain is Ribonuclease HII (226 aa).

Positions 24 to 216 (QRLCGVDEAG…VRKVLERGMV (193 aa)) constitute an RNase H type-2 domain. Positions 30, 31, and 125 each coordinate a divalent metal cation.

This sequence belongs to the RNase HII family. Requires Mn(2+) as cofactor. The cofactor is Mg(2+).

It is found in the cytoplasm. The enzyme catalyses Endonucleolytic cleavage to 5'-phosphomonoester.. Functionally, endonuclease that specifically degrades the RNA of RNA-DNA hybrids. The polypeptide is Ribonuclease HII (Cupriavidus metallidurans (strain ATCC 43123 / DSM 2839 / NBRC 102507 / CH34) (Ralstonia metallidurans)).